Consider the following 178-residue polypeptide: Putative peroxiredoxin in rubredoxin operon (178 aa).

The 161-residue stretch at 3–163 (RLVGKPAPEF…TLRVLKAFQT (161 aa)) folds into the Thioredoxin domain. The active-site Cysteine sulfenic acid (-SOH) intermediate is C50.

Belongs to the peroxiredoxin family. AhpC/Prx1 subfamily. In terms of assembly, homodimer; disulfide-linked, upon oxidation.

It is found in the cytoplasm. The enzyme catalyses a hydroperoxide + [protein]-dithiol = [protein]-disulfide + an alcohol + H2O. In terms of biological role, thiol-specific peroxidase that catalyzes the reduction of hydrogen peroxide and organic hydroperoxides to water and alcohols, respectively. Plays a role in cell protection against oxidative stress by detoxifying peroxides. The protein is Putative peroxiredoxin in rubredoxin operon of Clostridium pasteurianum.